A 1235-amino-acid chain; its full sequence is DNA polymerase catalytic subunit (1235 aa).

Disordered stretches follow at residues 640-692 (QGRF…TAGR) and 1098-1134 (ATAP…ASKP). Positions 650-661 (APKRPAAAREDE) are enriched in basic and acidic residues. Acidic residues predominate over residues 662–675 (ERPEEEGEDEDERE). Over residues 676–691 (EGGGEREPEGARETAG) the composition is skewed to basic and acidic residues.

The protein belongs to the DNA polymerase type-B family. In terms of assembly, forms a complex with the ssDNA-binding protein UL29, the DNA polymerase processivity factor, and the alkaline exonuclease. Interacts with the putative helicase-primase complex subunit UL8; this interaction may coordinate leading and lagging strand DNA synthesis at the replication fork.

It localises to the host nucleus. The catalysed reaction is DNA(n) + a 2'-deoxyribonucleoside 5'-triphosphate = DNA(n+1) + diphosphate. It carries out the reaction Endonucleolytic cleavage to 5'-phosphomonoester.. Its function is as follows. Replicates viral genomic DNA. The replication complex is composed of six viral proteins: the DNA polymerase, processivity factor, primase, primase-associated factor, helicase, and ssDNA-binding protein. Additionally, the polymerase contains an intrinsic ribonuclease H (RNase H) activity that specifically degrades RNA/DNA heteroduplexes or duplex DNA substrates in the 5' to 3' direction. Therefore, it can catalyze the excision of the RNA primers that initiate the synthesis of Okazaki fragments at a replication fork during viral DNA replication. The polypeptide is DNA polymerase catalytic subunit (Human herpesvirus 1 (strain Angelotti) (HHV-1)).